The chain runs to 85 residues: Homeobox protein knotted-1-like 8 (85 aa).

One can recognise an ELK domain in the interval 1 to 21 (ELKHQLLRKYGGYLGGLRQEF). The segment at residues 22–85 (SKRKKKGKLP…NQRKRHWKPA (64 aa)) is a DNA-binding region (homeobox; TALE-type).

The protein belongs to the TALE/KNOX homeobox family. As to expression, strongly expressed in ear inflorescence primordia and shoot meristem. Weakly expressed in embryos. Absent from leaves.

It localises to the nucleus. Its function is as follows. Probably binds to the DNA sequence 5'-TGAC-3'. The protein is Homeobox protein knotted-1-like 8 (KNOX8) of Zea mays (Maize).